The sequence spans 186 residues: MKLIVGLGNPGREYELTRHNIGFMAIDELAKRWNISLNEQKFKGVFGAGFVNGEKVILLKPLTYMNLSGESIRPLMDYYKIDVEDFVVLYDDLDIPVGKLRLRMKGSAGGHNGVKSTISHLGTQEFQRIRMGIDRPKNGMKVVDYVLGRFTSEEIPGVNHSIEKAADACEEWLNKPFLQIMNTFNS.

Position 14 (Tyr-14) interacts with tRNA. Catalysis depends on His-19, which acts as the Proton acceptor. Residues Tyr-64, Asn-66, and Asn-112 each coordinate tRNA.

Belongs to the PTH family. Monomer.

It is found in the cytoplasm. It carries out the reaction an N-acyl-L-alpha-aminoacyl-tRNA + H2O = an N-acyl-L-amino acid + a tRNA + H(+). Its function is as follows. Hydrolyzes ribosome-free peptidyl-tRNAs (with 1 or more amino acids incorporated), which drop off the ribosome during protein synthesis, or as a result of ribosome stalling. Catalyzes the release of premature peptidyl moieties from peptidyl-tRNA molecules trapped in stalled 50S ribosomal subunits, and thus maintains levels of free tRNAs and 50S ribosomes. The protein is Peptidyl-tRNA hydrolase of Bacillus cereus (strain ATCC 10987 / NRS 248).